Here is a 454-residue protein sequence, read N- to C-terminus: Flagellar hook protein FlgE (454 aa).

Belongs to the flagella basal body rod proteins family.

Its subcellular location is the bacterial flagellum basal body. Functionally, a flexible structure which links the flagellar filament to the drive apparatus in the basal body. Absence of the gene leads to absence of the hook protein, lack of the flagellar filament and thus loss of mobility. Approximately wild-type levels of the flagellar subunits are still produced and accumulate mostly in the cytosol. The protein is Flagellar hook protein FlgE (flgE) of Helicobacter mustelae.